The primary structure comprises 339 residues: Phenylalanine--tRNA ligase alpha subunit (339 aa).

Residue Glu-254 coordinates Mg(2+).

This sequence belongs to the class-II aminoacyl-tRNA synthetase family. Phe-tRNA synthetase alpha subunit type 1 subfamily. In terms of assembly, tetramer of two alpha and two beta subunits. It depends on Mg(2+) as a cofactor.

It localises to the cytoplasm. It carries out the reaction tRNA(Phe) + L-phenylalanine + ATP = L-phenylalanyl-tRNA(Phe) + AMP + diphosphate + H(+). The sequence is that of Phenylalanine--tRNA ligase alpha subunit from Clostridium beijerinckii (strain ATCC 51743 / NCIMB 8052) (Clostridium acetobutylicum).